Consider the following 239-residue polypeptide: Ribosomal RNA small subunit methyltransferase G (239 aa).

S-adenosyl-L-methionine-binding positions include glycine 77, phenylalanine 82, 128 to 129, and arginine 147; that span reads AE.

The protein belongs to the methyltransferase superfamily. RNA methyltransferase RsmG family.

It localises to the cytoplasm. Specifically methylates the N7 position of guanine in position 535 of 16S rRNA. This chain is Ribosomal RNA small subunit methyltransferase G, found in Bacillus cereus (strain ZK / E33L).